Here is a 109-residue protein sequence, read N- to C-terminus: Putative double-stranded DNA mimic protein YciU (109 aa).

Belongs to the putative dsDNA mimic protein family.

Functionally, may act as a double-stranded DNA (dsDNA) mimic. Probably regulates the activity of a dsDNA-binding protein. This chain is Putative double-stranded DNA mimic protein YciU, found in Shigella boydii serotype 18 (strain CDC 3083-94 / BS512).